A 148-amino-acid polypeptide reads, in one-letter code: Deoxyuridine 5'-triphosphate nucleotidohydrolase (148 aa).

Residues R65–G67, N78, T82–D84, and K92 contribute to the substrate site.

Belongs to the dUTPase family. Mg(2+) serves as cofactor.

It catalyses the reaction dUTP + H2O = dUMP + diphosphate + H(+). It participates in pyrimidine metabolism; dUMP biosynthesis; dUMP from dCTP (dUTP route): step 2/2. In terms of biological role, this enzyme is involved in nucleotide metabolism: it produces dUMP, the immediate precursor of thymidine nucleotides and it decreases the intracellular concentration of dUTP so that uracil cannot be incorporated into DNA. In Chlorobium phaeovibrioides (strain DSM 265 / 1930) (Prosthecochloris vibrioformis (strain DSM 265)), this protein is Deoxyuridine 5'-triphosphate nucleotidohydrolase.